The following is a 493-amino-acid chain: Proline--tRNA ligase (493 aa).

It belongs to the class-II aminoacyl-tRNA synthetase family. ProS type 3 subfamily. In terms of assembly, homodimer.

Its subcellular location is the cytoplasm. It catalyses the reaction tRNA(Pro) + L-proline + ATP = L-prolyl-tRNA(Pro) + AMP + diphosphate. Functionally, catalyzes the attachment of proline to tRNA(Pro) in a two-step reaction: proline is first activated by ATP to form Pro-AMP and then transferred to the acceptor end of tRNA(Pro). This chain is Proline--tRNA ligase, found in Porphyromonas gingivalis (strain ATCC BAA-308 / W83).